We begin with the raw amino-acid sequence, 348 residues long: UDP-3-O-acylglucosamine N-acyltransferase (348 aa).

His-241 functions as the Proton acceptor in the catalytic mechanism.

The protein belongs to the transferase hexapeptide repeat family. LpxD subfamily. As to quaternary structure, homotrimer.

It catalyses the reaction a UDP-3-O-[(3R)-3-hydroxyacyl]-alpha-D-glucosamine + a (3R)-hydroxyacyl-[ACP] = a UDP-2-N,3-O-bis[(3R)-3-hydroxyacyl]-alpha-D-glucosamine + holo-[ACP] + H(+). The protein operates within bacterial outer membrane biogenesis; LPS lipid A biosynthesis. Its function is as follows. Catalyzes the N-acylation of UDP-3-O-acylglucosamine using 3-hydroxyacyl-ACP as the acyl donor. Is involved in the biosynthesis of lipid A, a phosphorylated glycolipid that anchors the lipopolysaccharide to the outer membrane of the cell. The sequence is that of UDP-3-O-acylglucosamine N-acyltransferase from Neisseria meningitidis serogroup C / serotype 2a (strain ATCC 700532 / DSM 15464 / FAM18).